A 672-amino-acid polypeptide reads, in one-letter code: Rho GTPase-activating protein 40 (672 aa).

The interval 43–68 (GCSPGLSTGPTNLQQHPQKPRPADCS) is disordered. Residues 47-59 (GLSTGPTNLQQHP) are compositionally biased toward polar residues. Positions 321 to 519 (VPLHSLLEAD…MMVQYQDLLW (199 aa)) constitute a Rho-GAP domain.

Functionally, GTPase activator for the Rho-type GTPases by converting them to an inactive GDP-bound state. The sequence is that of Rho GTPase-activating protein 40 from Mus musculus (Mouse).